A 224-amino-acid polypeptide reads, in one-letter code: 7-cyano-7-deazaguanine synthase (224 aa).

Position 9–19 (9–19) interacts with ATP; sequence ISGGMDSTLCA. Zn(2+) contacts are provided by Cys-190, Cys-198, Cys-201, and Cys-204.

It belongs to the QueC family. Zn(2+) serves as cofactor.

The catalysed reaction is 7-carboxy-7-deazaguanine + NH4(+) + ATP = 7-cyano-7-deazaguanine + ADP + phosphate + H2O + H(+). Its pathway is purine metabolism; 7-cyano-7-deazaguanine biosynthesis. In terms of biological role, catalyzes the ATP-dependent conversion of 7-carboxy-7-deazaguanine (CDG) to 7-cyano-7-deazaguanine (preQ(0)). This chain is 7-cyano-7-deazaguanine synthase, found in Campylobacter jejuni subsp. jejuni serotype O:6 (strain 81116 / NCTC 11828).